A 151-amino-acid chain; its full sequence is SsrA-binding protein (151 aa).

Belongs to the SmpB family.

The protein localises to the cytoplasm. Functionally, required for rescue of stalled ribosomes mediated by trans-translation. Binds to transfer-messenger RNA (tmRNA), required for stable association of tmRNA with ribosomes. tmRNA and SmpB together mimic tRNA shape, replacing the anticodon stem-loop with SmpB. tmRNA is encoded by the ssrA gene; the 2 termini fold to resemble tRNA(Ala) and it encodes a 'tag peptide', a short internal open reading frame. During trans-translation Ala-aminoacylated tmRNA acts like a tRNA, entering the A-site of stalled ribosomes, displacing the stalled mRNA. The ribosome then switches to translate the ORF on the tmRNA; the nascent peptide is terminated with the 'tag peptide' encoded by the tmRNA and targeted for degradation. The ribosome is freed to recommence translation, which seems to be the essential function of trans-translation. The polypeptide is SsrA-binding protein (Wolinella succinogenes (strain ATCC 29543 / DSM 1740 / CCUG 13145 / JCM 31913 / LMG 7466 / NCTC 11488 / FDC 602W) (Vibrio succinogenes)).